The sequence spans 166 residues: Ribosome maturation factor RimM (166 aa).

Residues 94-166 (EGEYYHADLI…IVIEAAYADQ (73 aa)) form the PRC barrel domain.

Belongs to the RimM family. Binds ribosomal protein uS19.

It is found in the cytoplasm. Functionally, an accessory protein needed during the final step in the assembly of 30S ribosomal subunit, possibly for assembly of the head region. Essential for efficient processing of 16S rRNA. May be needed both before and after RbfA during the maturation of 16S rRNA. It has affinity for free ribosomal 30S subunits but not for 70S ribosomes. This chain is Ribosome maturation factor RimM, found in Novosphingobium aromaticivorans (strain ATCC 700278 / DSM 12444 / CCUG 56034 / CIP 105152 / NBRC 16084 / F199).